The sequence spans 225 residues: 3-dehydroquinate dehydratase (225 aa).

Residues S6, 30–32 (EWR), and R62 contribute to the 3-dehydroquinate site. H118 serves as the catalytic Proton donor/acceptor. K143 (schiff-base intermediate with substrate) is an active-site residue. Residues R186, S205, and Q209 each contribute to the 3-dehydroquinate site.

It belongs to the type-I 3-dehydroquinase family. As to quaternary structure, homodimer.

The catalysed reaction is 3-dehydroquinate = 3-dehydroshikimate + H2O. Its pathway is metabolic intermediate biosynthesis; chorismate biosynthesis; chorismate from D-erythrose 4-phosphate and phosphoenolpyruvate: step 3/7. In terms of biological role, involved in the third step of the chorismate pathway, which leads to the biosynthesis of aromatic amino acids. Catalyzes the cis-dehydration of 3-dehydroquinate (DHQ) and introduces the first double bond of the aromatic ring to yield 3-dehydroshikimate. The protein is 3-dehydroquinate dehydratase of Streptococcus sanguinis (strain SK36).